The primary structure comprises 361 residues: Phospho-N-acetylmuramoyl-pentapeptide-transferase (361 aa).

The next 10 helical transmembrane spans lie at 25–45 (RAVL…PWVI), 73–93 (TMGG…WADL), 97–117 (YVWL…YDDW), 134–154 (MFWQ…TASL), 168–188 (VIYP…IVGT), 200–220 (GLAA…AYVA), 240–260 (VAVF…FNAY), 264–284 (VFMG…VAVI), 289–309 (IVLF…MIQV), and 338–358 (QVVV…LSTL).

The protein belongs to the glycosyltransferase 4 family. MraY subfamily. Mg(2+) serves as cofactor.

It localises to the cell inner membrane. The enzyme catalyses UDP-N-acetyl-alpha-D-muramoyl-L-alanyl-gamma-D-glutamyl-meso-2,6-diaminopimeloyl-D-alanyl-D-alanine + di-trans,octa-cis-undecaprenyl phosphate = di-trans,octa-cis-undecaprenyl diphospho-N-acetyl-alpha-D-muramoyl-L-alanyl-D-glutamyl-meso-2,6-diaminopimeloyl-D-alanyl-D-alanine + UMP. The protein operates within cell wall biogenesis; peptidoglycan biosynthesis. Catalyzes the initial step of the lipid cycle reactions in the biosynthesis of the cell wall peptidoglycan: transfers peptidoglycan precursor phospho-MurNAc-pentapeptide from UDP-MurNAc-pentapeptide onto the lipid carrier undecaprenyl phosphate, yielding undecaprenyl-pyrophosphoryl-MurNAc-pentapeptide, known as lipid I. In Laribacter hongkongensis (strain HLHK9), this protein is Phospho-N-acetylmuramoyl-pentapeptide-transferase.